Reading from the N-terminus, the 1413-residue chain is Sushi, nidogen and EGF-like domain-containing protein 1 (1413 aa).

The signal sequence occupies residues 1–24 (MRHGVAWALLVAAALGLGARGVRG). In terms of domain architecture, NIDO spans 103-258 (AFWADVDNRR…GRWAFRIDDA (156 aa)). N-linked (GlcNAc...) asparagine glycosylation is found at Asn-145 and Asn-204. 3 consecutive EGF-like domains span residues 268–309 (TTSV…RRCH), 311–347 (DVNE…PTCE), and 349–385 (AQSP…AACE). Cystine bridges form between Cys-272–Cys-284, Cys-278–Cys-297, Cys-299–Cys-308, Cys-315–Cys-326, Cys-320–Cys-335, Cys-337–Cys-346, Cys-353–Cys-364, Cys-358–Cys-373, Cys-375–Cys-384, Cys-391–Cys-402, Cys-396–Cys-411, Cys-413–Cys-422, Cys-433–Cys-444, Cys-438–Cys-453, Cys-455–Cys-464, Cys-472–Cys-480, Cys-474–Cys-488, and Cys-490–Cys-499. Asn-292 is a glycosylation site (N-linked (GlcNAc...) asparagine). One can recognise a Follistatin-like 1 domain in the interval 352–374 (PCDTKECQHGGQCQVENGSAVCV). N-linked (GlcNAc...) asparagine glycosylation occurs at Asn-368. The 37-residue stretch at 387–423 (DVDDCSPDPCLNGGSCVDLVGNYTCLCAEPFKGLRCE) folds into the EGF-like 4; calcium-binding domain. Asn-408 carries N-linked (GlcNAc...) asparagine glycosylation. 2 EGF-like domains span residues 429-465 (VPDA…LDCR) and 468-500 (VPDD…LLCE). Asn-484 carries N-linked (GlcNAc...) asparagine glycosylation. The 24-residue stretch at 507-530 (PCNMNTQCPDGGYCMEHGGSYLCV) folds into the Follistatin-like 2 domain. Asn-536 carries an N-linked (GlcNAc...) asparagine glycan. EGF-like domains are found at residues 541 to 577 (LPSP…KHCE), 580 to 616 (RPHL…RHCE), 619 to 655 (KPDS…RHCE), and 657 to 693 (APSP…RRCQ). 26 cysteine pairs are disulfide-bonded: Cys-545–Cys-556, Cys-550–Cys-565, Cys-567–Cys-576, Cys-584–Cys-595, Cys-589–Cys-604, Cys-606–Cys-615, Cys-623–Cys-634, Cys-628–Cys-643, Cys-645–Cys-654, Cys-661–Cys-672, Cys-666–Cys-681, Cys-683–Cys-692, Cys-698–Cys-739, Cys-724–Cys-751, Cys-757–Cys-768, Cys-762–Cys-777, Cys-779–Cys-788, Cys-795–Cys-806, Cys-800–Cys-815, Cys-817–Cys-826, Cys-833–Cys-844, Cys-838–Cys-853, Cys-855–Cys-864, Cys-871–Cys-882, Cys-876–Cys-891, and Cys-893–Cys-902. The Sushi domain maps to 696–753 (VDCGPPEEVKHATLRFNGTRLGAVALYACDRGYSLSAPSRIRVCQPHGVWSEPPQCLE). The N-linked (GlcNAc...) asparagine glycan is linked to Asn-712. The EGF-like 11; calcium-binding domain occupies 753–789 (EIDECRSQPCLHGGSCQDRVAGYLCLCSTGYEGAHCE). In terms of domain architecture, EGF-like 12; calcium-binding spans 791-827 (ERDECRAHPCRNGGSCRNLPGAYVCRCPAGFVGVHCE). 2 EGF-like domains span residues 829–865 (EVDA…YHCE) and 867–903 (VSDP…EDCA). An N-linked (GlcNAc...) asparagine glycan is attached at Asn-886. Fibronectin type-III domains are found at residues 908-1006 (PPTA…TRPR), 1007-1105 (PVEG…TRPL), and 1106-1200 (PPAN…SPRD). N-linked (GlcNAc...) asparagine glycosylation is found at Asn-977, Asn-1015, Asn-1109, and Asn-1139. The disordered stretch occupies residues 1206 to 1226 (WHQGGHHPRVLKNRPPPARLP). Residues 1207-1217 (HQGGHHPRVLK) are compositionally biased toward basic residues. The region spanning 1307–1343 (VPGNCSENPCQNGGTCVPGADAHSCDCGPGFKGRRCE) is the EGF-like 15 domain. Residue Asn-1310 is glycosylated (N-linked (GlcNAc...) asparagine). Cystine bridges form between Cys-1311–Cys-1322, Cys-1316–Cys-1331, and Cys-1333–Cys-1342. The interval 1394-1413 (TSLKKTPNRKQSKSQTLEKS) is disordered.

In terms of processing, phosphorylated on serine and threonine residues. Post-translationally, N-glycosylated.

The protein localises to the secreted. It is found in the extracellular space. It localises to the extracellular matrix. The sequence is that of Sushi, nidogen and EGF-like domain-containing protein 1 from Homo sapiens (Human).